The primary structure comprises 921 residues: Translation initiation factor IF-2 (921 aa).

Residues 1-296 (MADQNTPGDK…PGPQKQRGRL (296 aa)) are disordered. Low complexity predominate over residues 80–89 (RPSGPRPSGG). Basic and acidic residues predominate over residues 117–183 (ARVRDLEERR…AKKRFGEGEA (67 aa)). Composition is skewed to low complexity over residues 184–237 (PRPA…ARPA) and 248–257 (GRAPAAVAAG). The 170-residue stretch at 417–586 (PRSPVVTVMG…MIALQADILD (170 aa)) folds into the tr-type G domain. Residues 426–433 (GHVDHGKT) are G1. 426–433 (GHVDHGKT) lines the GTP pocket. Positions 451–455 (GITQH) are G2. Residues 474 to 477 (DTPG) are G3. Residues 474–478 (DTPGH) and 528–531 (NKID) contribute to the GTP site. Positions 528–531 (NKID) are G4. The interval 564–566 (SAK) is G5.

The protein belongs to the TRAFAC class translation factor GTPase superfamily. Classic translation factor GTPase family. IF-2 subfamily.

It localises to the cytoplasm. One of the essential components for the initiation of protein synthesis. Protects formylmethionyl-tRNA from spontaneous hydrolysis and promotes its binding to the 30S ribosomal subunits. Also involved in the hydrolysis of GTP during the formation of the 70S ribosomal complex. This Bradyrhizobium sp. (strain ORS 278) protein is Translation initiation factor IF-2.